The primary structure comprises 118 residues: D-dopachrome decarboxylase (118 aa).

The residue at position 2 (P2) is an N-acetylproline. K33 is subject to N6-acetyllysine. Residue S90 is modified to Phosphoserine.

It belongs to the MIF family. As to quaternary structure, homotrimer.

It localises to the cytoplasm. The enzyme catalyses D-dopachrome + H(+) = 5,6-dihydroxyindole + CO2. Its function is as follows. Tautomerization of D-dopachrome with decarboxylation to give 5,6-dihydroxyindole (DHI). This is D-dopachrome decarboxylase (Ddt) from Mus musculus (Mouse).